Here is a 407-residue protein sequence, read N- to C-terminus: uncharacterized protein (407 aa).

Coiled coils occupy residues 96–130 and 287–345; these read TDSI…FKNE and MKCY…AKTS. Residues 302–317 show a composition bias toward basic and acidic residues; sequence EKRKDNLQKQNEEAAK. The disordered stretch occupies residues 302 to 394; that stretch reads EKRKDNLQKQ…NMDPAINESD (93 aa). A compositionally biased stretch (basic residues) spans 318-331; the sequence is ITKRKNRQEKRREK. Residues 344–370 show a composition bias toward low complexity; that stretch reads TSVSSIPDTSSTTTSTNSTPTNTKSNS.

This is an uncharacterized protein from Acanthamoeba polyphaga (Amoeba).